Here is a 706-residue protein sequence, read N- to C-terminus: MALAKAASINDDIHDLTMRAFRCYVLDLVEQYEGGHPGSAMGMVAMGIALWKYTMKYSTNDPTWFNRDRFVLSNGHVCLFQYLFQHLSGLKSMTEKQLKSYHSSDYHSKCPGHPEIENEAVEVTTGPLGQGISNSVGLAIASKNLGALYNKPGYEVVNNTTYCIVGDACLQEGPALESISFAGHLGLDNLVVIYDNNQVCCDGSVDIANTEDISAKFRACNWNVIEVEDGARDVATIVKALELAGAEKNRPTLINVRTIIGTDSAFQNHCAAHGSALGEEGIRELKIKYGFNPSQKFHFPQEVYDFFSDIPAKGDEYVSNWNKLVSSYVKEFPELGAEFQSRVKGELPKNWKSLLPNNLPNEDTATRTSARAMVRALAKDVPNVIAGSADLSVSVNLPWPGSKYFENPQLATQCGLAGDYSGRYVEFGIREHCMCAIANGLAAFNKGTFLPITSSFYMFYLYAAPALRMAALQELKAIHIATHDSIGAGEDGPTHQPIAQSALWRAMPNFYYMRPGDASEVRGLFEKAVELPLSTLFSLSRHEVPQYPGKSSIELAKRGGYVFEDAKDADIQLIGAGSELEQAVKTARILRSRGLKVRILSFPCQRLFDEQSVGYRRSVLQRGKVPTVVIEAYVAYGWERYATAGYTMNTFGKSLPVEDVYEYFGFNPSEISKKIEGYVRAVKANPDLLYEFIDLTEKPKHDQNHL.

Residues His-76 and 126 to 128 (GPL) contribute to the thiamine diphosphate site. The Mg(2+) site is built by Asp-167, Asn-197, and Val-199. Residue Asn-197 participates in thiamine diphosphate binding. Positions 273, 431, and 459 each coordinate thiamine diphosphate. Catalysis depends on Glu-431, which acts as the Proton donor. A Microbody targeting signal motif is present at residues 704-706 (NHL).

Belongs to the transketolase family. It depends on Mg(2+) as a cofactor. Requires Ca(2+) as cofactor. Mn(2+) is required as a cofactor. Co(2+) serves as cofactor. The cofactor is thiamine diphosphate.

The protein resides in the peroxisome. The catalysed reaction is D-xylulose 5-phosphate + formaldehyde = dihydroxyacetone + D-glyceraldehyde 3-phosphate. Functionally, involved in assimilation of formaldehyde. This is Dihydroxyacetone synthase (DAS1) from Candida boidinii (Yeast).